A 100-amino-acid polypeptide reads, in one-letter code: Small ribosomal subunit protein uS14c (100 aa).

It belongs to the universal ribosomal protein uS14 family. Part of the 30S ribosomal subunit.

The protein localises to the plastid. In terms of biological role, binds 16S rRNA, required for the assembly of 30S particles. In Cuscuta exaltata (Tall dodder), this protein is Small ribosomal subunit protein uS14c.